A 307-amino-acid chain; its full sequence is MRYLITGATGGLGGHILEYFIAQIPFSDFAASSSSPENRSRFESRGVNFRHLDYENPTTLNRALHDVENLLFISTNANVIDVEKVKRQHRNVVEAARKANVKHVWYTSLPFGGLTNDSEVSVQRAHLATEKMLKESGLTFTCIREGIYVEGFPLFLNWYPETTLLTLPRDGEIAFTSRVELAVCTARLMIQGGFENRIVLLTAGETITAKELVSVINETTGRRVELRYVSPDEFVDAGPRNDRGGKSRAFFETLVSLWESAASGELRTMDGLMAEILGRDPIPPRDAVRQLLVENRDHTWHQMYAKK.

NADP(+) contacts are provided by residues 4-9 (LITGAT), 32-36 (SSSSP), 53-54 (DY), 74-76 (STN), and 148-151 (YVEG).

This sequence belongs to the NmrA-type oxidoreductase family.

The catalysed reaction is (2S)-5,5-dimethyl-2,3,4,5-tetrahydropyridine-2,6-dicarboxylate + NADPH + 2 H(+) = (6S)-3,3-dimethylpiperidine-2,6-dicarboxylate + NADP(+). It catalyses the reaction (2S)-5,5-dimethyl-2,3,4,5-tetrahydropyridine-2,6-dicarboxylate + NADH + 2 H(+) = (6S)-3,3-dimethylpiperidine-2,6-dicarboxylate + NAD(+). It functions in the pathway secondary metabolite biosynthesis; terpenoid biosynthesis. In terms of biological role, nmrA-like family domain-containing oxidoreductase; part of the gene cluster that mediates the biosynthesis of flavunoidine, an alkaloidal terpenoid with a tetracyclic cage-like core connected to dimethylcadaverine via a C-N bond and acylated with 5,5-dimethyl-L-pipecolate. The tetracyclic core is synthesized by the terpene cyclase flvE and the cytochrome P450 monooxygenase flvD. The terpene cyclase flvE catalyzes the cyclization of farnesyl pyrophosphate (FPP) to form (1R,4R,5S)-(+)-acoradiene and the cytochrome P450 monooxygenase flvD is then responsible for oxidative conversion of (1R,4R,5S)-(+)-acoradiene into the tetracyclic cage present in the final product flavunoidine. In parallel, the N-methyltransferase flvH dimethylates L-lysine to give N,N-dimethyl-L-Lysin which is decarboxylated by flvG to afford dimethylcadaverine. The terpene cyclase-like protein flvF is the enzyme that attaches the dimethylcadaverine precusor at the C-7 of the tetracyclic cage to yield pre-flavunoidine. The cytochrome monooxygenase flvC hydroxylates the C-10 position of pre-flavunoidine whereas the NRPS flvI acylates the terpenoid core at the hydroxylated C-10 with dimethylpipecolate to yield final flavunoidine. The bifunctional enzyme flvA and the dehydrogenase flvB are responsible for the synthesis of the dimethylpipecolate precursor. The PLP-dependent lyase domain of flvA might use L-O-acetyl-homoserine and alpha-keto-isovalerate to form an intermediary ketone that can cyclize intramolecularly to yield an imine. The imine can be reduced by flvB to yield the 6-carboxylated pipecolate. The C-terminal alpha-KG-dependent oxygenase domain of flvA is then proposed to catalyze the decarboxylation to yield dimethylpipecolate. The chain is NmrA-like family domain-containing oxidoreductase flvB from Aspergillus flavus (strain ATCC 200026 / FGSC A1120 / IAM 13836 / NRRL 3357 / JCM 12722 / SRRC 167).